A 1014-amino-acid chain; its full sequence is Beta-galactosidase (1014 aa).

E460 acts as the Proton donor in catalysis. E527 (nucleophile) is an active-site residue.

The protein belongs to the glycosyl hydrolase 2 family.

The catalysed reaction is Hydrolysis of terminal non-reducing beta-D-galactose residues in beta-D-galactosides.. This is Beta-galactosidase (lacZ) from Halalkalibacterium halodurans (strain ATCC BAA-125 / DSM 18197 / FERM 7344 / JCM 9153 / C-125) (Bacillus halodurans).